We begin with the raw amino-acid sequence, 208 residues long: N-(5'-phosphoribosyl)anthranilate isomerase (208 aa).

It belongs to the TrpF family.

It catalyses the reaction N-(5-phospho-beta-D-ribosyl)anthranilate = 1-(2-carboxyphenylamino)-1-deoxy-D-ribulose 5-phosphate. The protein operates within amino-acid biosynthesis; L-tryptophan biosynthesis; L-tryptophan from chorismate: step 3/5. The sequence is that of N-(5'-phosphoribosyl)anthranilate isomerase from Dechloromonas aromatica (strain RCB).